A 351-amino-acid chain; its full sequence is Protein pelota homolog (351 aa).

This sequence belongs to the eukaryotic release factor 1 family. Pelota subfamily. In terms of assembly, monomer. A divalent metal cation serves as cofactor.

It localises to the cytoplasm. Functionally, may function in recognizing stalled ribosomes, interact with stem-loop structures in stalled mRNA molecules, and effect endonucleolytic cleavage of the mRNA. May play a role in the release non-functional ribosomes and degradation of damaged mRNAs. Has endoribonuclease activity. The polypeptide is Protein pelota homolog (Methanosphaera stadtmanae (strain ATCC 43021 / DSM 3091 / JCM 11832 / MCB-3)).